Consider the following 334-residue polypeptide: GTP 3',8-cyclase (334 aa).

Residues Arg-13 to Ala-239 enclose the Radical SAM core domain. Arg-22 provides a ligand contact to GTP. [4Fe-4S] cluster-binding residues include Cys-29 and Cys-33. An S-adenosyl-L-methionine-binding site is contributed by Tyr-35. [4Fe-4S] cluster is bound at residue Cys-36. Arg-73 lines the GTP pocket. Gly-77 is an S-adenosyl-L-methionine binding site. A GTP-binding site is contributed by Thr-104. Residue Ser-128 coordinates S-adenosyl-L-methionine. Lys-165 contacts GTP. Residue Met-199 coordinates S-adenosyl-L-methionine. 2 residues coordinate [4Fe-4S] cluster: Cys-262 and Cys-265. GTP is bound at residue Arg-267–Arg-269. Residue Cys-279 coordinates [4Fe-4S] cluster.

The protein belongs to the radical SAM superfamily. MoaA family. Monomer and homodimer. It depends on [4Fe-4S] cluster as a cofactor.

The enzyme catalyses GTP + AH2 + S-adenosyl-L-methionine = (8S)-3',8-cyclo-7,8-dihydroguanosine 5'-triphosphate + 5'-deoxyadenosine + L-methionine + A + H(+). Its pathway is cofactor biosynthesis; molybdopterin biosynthesis. In terms of biological role, catalyzes the cyclization of GTP to (8S)-3',8-cyclo-7,8-dihydroguanosine 5'-triphosphate. This is GTP 3',8-cyclase from Vibrio vulnificus (strain YJ016).